A 272-amino-acid polypeptide reads, in one-letter code: Orotidine 5'-phosphate decarboxylase (272 aa).

Lys-95 (proton donor) is an active-site residue.

It belongs to the OMP decarboxylase family. Type 2 subfamily.

The catalysed reaction is orotidine 5'-phosphate + H(+) = UMP + CO2. The protein operates within pyrimidine metabolism; UMP biosynthesis via de novo pathway; UMP from orotate: step 2/2. The protein is Orotidine 5'-phosphate decarboxylase of Cupriavidus necator (strain ATCC 17699 / DSM 428 / KCTC 22496 / NCIMB 10442 / H16 / Stanier 337) (Ralstonia eutropha).